A 187-amino-acid chain; its full sequence is Peptide deformylase (187 aa).

Fe cation contacts are provided by cysteine 107 and histidine 149. Glutamate 150 is a catalytic residue. Histidine 153 provides a ligand contact to Fe cation.

The protein belongs to the polypeptide deformylase family. Requires Fe(2+) as cofactor.

It catalyses the reaction N-terminal N-formyl-L-methionyl-[peptide] + H2O = N-terminal L-methionyl-[peptide] + formate. In terms of biological role, removes the formyl group from the N-terminal Met of newly synthesized proteins. Requires at least a dipeptide for an efficient rate of reaction. N-terminal L-methionine is a prerequisite for activity but the enzyme has broad specificity at other positions. This is Peptide deformylase from Synechocystis sp. (strain ATCC 27184 / PCC 6803 / Kazusa).